Consider the following 187-residue polypeptide: Peptidyl-tRNA hydrolase (187 aa).

Y15 contributes to the tRNA binding site. The active-site Proton acceptor is H20. F64, N66, and N112 together coordinate tRNA.

Belongs to the PTH family. As to quaternary structure, monomer.

It localises to the cytoplasm. The enzyme catalyses an N-acyl-L-alpha-aminoacyl-tRNA + H2O = an N-acyl-L-amino acid + a tRNA + H(+). Hydrolyzes ribosome-free peptidyl-tRNAs (with 1 or more amino acids incorporated), which drop off the ribosome during protein synthesis, or as a result of ribosome stalling. Its function is as follows. Catalyzes the release of premature peptidyl moieties from peptidyl-tRNA molecules trapped in stalled 50S ribosomal subunits, and thus maintains levels of free tRNAs and 50S ribosomes. This Bacteroides fragilis (strain ATCC 25285 / DSM 2151 / CCUG 4856 / JCM 11019 / LMG 10263 / NCTC 9343 / Onslow / VPI 2553 / EN-2) protein is Peptidyl-tRNA hydrolase.